Consider the following 243-residue polypeptide: Pyridoxine 5'-phosphate synthase (243 aa).

Residue Asn-9 participates in 3-amino-2-oxopropyl phosphate binding. A 1-deoxy-D-xylulose 5-phosphate-binding site is contributed by 11–12 (DH). 3-amino-2-oxopropyl phosphate is bound at residue Arg-20. Catalysis depends on His-45, which acts as the Proton acceptor. 1-deoxy-D-xylulose 5-phosphate-binding residues include Arg-47 and His-52. Glu-72 acts as the Proton acceptor in catalysis. Thr-102 serves as a coordination point for 1-deoxy-D-xylulose 5-phosphate. The Proton donor role is filled by His-193. Residues Gly-194 and 215-216 (GH) each bind 3-amino-2-oxopropyl phosphate.

This sequence belongs to the PNP synthase family. As to quaternary structure, homooctamer; tetramer of dimers.

Its subcellular location is the cytoplasm. The catalysed reaction is 3-amino-2-oxopropyl phosphate + 1-deoxy-D-xylulose 5-phosphate = pyridoxine 5'-phosphate + phosphate + 2 H2O + H(+). Its pathway is cofactor biosynthesis; pyridoxine 5'-phosphate biosynthesis; pyridoxine 5'-phosphate from D-erythrose 4-phosphate: step 5/5. Functionally, catalyzes the complicated ring closure reaction between the two acyclic compounds 1-deoxy-D-xylulose-5-phosphate (DXP) and 3-amino-2-oxopropyl phosphate (1-amino-acetone-3-phosphate or AAP) to form pyridoxine 5'-phosphate (PNP) and inorganic phosphate. The protein is Pyridoxine 5'-phosphate synthase of Shigella sonnei (strain Ss046).